A 529-amino-acid chain; its full sequence is Arginine--tRNA ligase (529 aa).

The 'HIGH' region motif lies at 113-123; it reads ANPTGPLHIGH.

This sequence belongs to the class-I aminoacyl-tRNA synthetase family. Monomer.

It localises to the cytoplasm. It carries out the reaction tRNA(Arg) + L-arginine + ATP = L-arginyl-tRNA(Arg) + AMP + diphosphate. The protein is Arginine--tRNA ligase of Aliarcobacter butzleri (strain RM4018) (Arcobacter butzleri).